The primary structure comprises 247 residues: 5'-nucleotidase SurE (247 aa).

Residues D8, D9, S39, and N91 each contribute to the a divalent metal cation site.

It belongs to the SurE nucleotidase family. The cofactor is a divalent metal cation.

The protein resides in the cytoplasm. The catalysed reaction is a ribonucleoside 5'-phosphate + H2O = a ribonucleoside + phosphate. Its function is as follows. Nucleotidase that shows phosphatase activity on nucleoside 5'-monophosphates. In Methylobacillus flagellatus (strain ATCC 51484 / DSM 6875 / VKM B-1610 / KT), this protein is 5'-nucleotidase SurE.